A 391-amino-acid chain; its full sequence is Pectin acetylesterase 11 (391 aa).

The signal sequence occupies residues 1 to 23 (MTWLKQMWSSILVLAVVVIGARA). Active-site charge relay system residues include S171, D267, and H334.

Belongs to the pectinacetylesterase family.

The protein localises to the secreted. Its subcellular location is the cell wall. Functionally, hydrolyzes acetyl esters in homogalacturonan regions of pectin. In type I primary cell wall, galacturonic acid residues of pectin can be acetylated at the O-2 and O-3 positions. Decreasing the degree of acetylation of pectin gels in vitro alters their physical properties. This is Pectin acetylesterase 11 from Arabidopsis thaliana (Mouse-ear cress).